We begin with the raw amino-acid sequence, 503 residues long: Transmembrane prolyl 4-hydroxylase (503 aa).

Residues 1–49 (MAAAVATVQRPEAETVEEASNLQWPLPPEHRPSGAATRPGDSEDAPVRP) form a disordered region. At 1–61 (MAAAVATVQR…KPRGICSRAY (61 aa)) the chain is on the cytoplasmic side. A helical; Signal-anchor for type II membrane protein membrane pass occupies residues 62 to 82 (FLVLMVFVHLYLGNVLALLLF). Over 83–503 (VHYSNGDEST…RAYSDARVEL (421 aa)) the chain is Lumenal. The interval 90–110 (ESTDPGPQRREQSPQPVPTLG) is disordered. 2 EF-hand domains span residues 186 to 221 (AMQV…GNGR) and 225 to 260 (PENI…DFHK). Residues Asp-199, Asn-201, Asp-203, Arg-205, Glu-210, Asp-238, Asp-240, Asp-242, and Glu-249 each contribute to the Ca(2+) site. One can recognise a Fe2OG dioxygenase domain in the interval 310-461 (EFSEPLQVVR…KWIANNWINV (152 aa)). 2 residues coordinate Fe cation: His-329 and Asp-331. N-linked (GlcNAc...) asparagine glycans are attached at residues Asn-349 and Asn-369. A Fe cation-binding site is contributed by Glu-375. An N-linked (GlcNAc...) asparagine glycan is attached at Asn-383. Lys-452 lines the 2-oxoglutarate pocket.

In terms of assembly, homodimer. Fe(2+) serves as cofactor. It depends on L-ascorbate as a cofactor. In terms of processing, glycosylated. In terms of tissue distribution, highest expression levels are detected in the eye and brain, especially in the retinal epithelium cells and cortical neurons. Also expressed in skeletal muscle, lung, heart, adrenal gland, kidney, prostate, thyroid and testis.

It localises to the endoplasmic reticulum membrane. The enzyme catalyses L-prolyl-[hypoxia-inducible factor alpha subunit] + 2-oxoglutarate + O2 = trans-4-hydroxy-L-prolyl-[hypoxia-inducible factor alpha subunit] + succinate + CO2. Catalyzes the post-translational formation of 4-hydroxyproline in hypoxia-inducible factor (HIF) alpha proteins. Hydroxylates HIF1A at 'Pro-402' and 'Pro-564'. May function as a cellular oxygen sensor and, under normoxic conditions, may target HIF through the hydroxylation for proteasomal degradation via the von Hippel-Lindau ubiquitination complex. The polypeptide is Transmembrane prolyl 4-hydroxylase (P4htm) (Mus musculus (Mouse)).